A 352-amino-acid chain; its full sequence is Gap junction alpha-4 protein (352 aa).

Residues 2-23 (GDWEFLEKLLDQVQEHSTSIGK) lie on the Cytoplasmic side of the membrane. The helical transmembrane segment at 24–46 (IWLMVLFIFRILILGLAGESVWG) threads the bilayer. The Extracellular portion of the chain corresponds to 47–76 (DEQSDFTCNTEQPGCTNVCYDKAFPISHVR). Residues 77 to 99 (YWVLQFLFVSTPTLFYLGHVIYL) traverse the membrane as a helical segment. Residues 100–153 (SRKEEKLKQKESELRALDDKEQVEQAIAIIEKKKLKLYIQEDGTVKIKGALMYT) are Cytoplasmic-facing. Residues 154–176 (YLTSVIFKSIFEAGFLLGQWYLY) traverse the membrane as a helical segment. Residues 177–208 (GFVMTPIYVCERVPCPHKVDCFVSRPMEKTIF) are Extracellular-facing. Residues 209 to 231 (IIFMLVVSLISLFLNVLELIHLI) form a helical membrane-spanning segment. The Cytoplasmic segment spans residues 232–352 (CKSMIHALKK…SSSASKKQYV (121 aa)). The disordered stretch occupies residues 332-352 (HSTVEKASTRASSSASKKQYV). Residues 340–352 (TRASSSASKKQYV) show a composition bias toward low complexity.

The protein belongs to the connexin family. Alpha-type (group II) subfamily. In terms of assembly, a connexon is composed of a hexamer of connexins. Expressed in ovarian somatic cells, heart, leg muscle, liver and eye but not in brain.

It is found in the cell membrane. The protein localises to the cell junction. The protein resides in the gap junction. Functionally, one gap junction consists of a cluster of closely packed pairs of transmembrane channels, the connexons, through which materials of low MW diffuse from one cell to a neighboring cell. The polypeptide is Gap junction alpha-4 protein (gja4) (Xenopus laevis (African clawed frog)).